Consider the following 211-residue polypeptide: tRNA (guanine-N(7)-)-methyltransferase (211 aa).

S-adenosyl-L-methionine is bound by residues Glu-44, Asp-69, Asp-96, and Asp-118. Residue Asp-118 is part of the active site. Lys-122 provides a ligand contact to substrate. The interval Lys-124–Arg-129 is interaction with RNA. Residues Asp-154 and Thr-191–Glu-194 each bind substrate.

Belongs to the class I-like SAM-binding methyltransferase superfamily. TrmB family.

It carries out the reaction guanosine(46) in tRNA + S-adenosyl-L-methionine = N(7)-methylguanosine(46) in tRNA + S-adenosyl-L-homocysteine. It participates in tRNA modification; N(7)-methylguanine-tRNA biosynthesis. Catalyzes the formation of N(7)-methylguanine at position 46 (m7G46) in tRNA. This chain is tRNA (guanine-N(7)-)-methyltransferase, found in Streptococcus pyogenes serotype M12 (strain MGAS2096).